The primary structure comprises 276 residues: 2-dehydro-3-deoxyphosphooctonate aldolase (276 aa).

The protein belongs to the KdsA family.

It is found in the cytoplasm. The catalysed reaction is D-arabinose 5-phosphate + phosphoenolpyruvate + H2O = 3-deoxy-alpha-D-manno-2-octulosonate-8-phosphate + phosphate. It functions in the pathway carbohydrate biosynthesis; 3-deoxy-D-manno-octulosonate biosynthesis; 3-deoxy-D-manno-octulosonate from D-ribulose 5-phosphate: step 2/3. It participates in bacterial outer membrane biogenesis; lipopolysaccharide biosynthesis. The chain is 2-dehydro-3-deoxyphosphooctonate aldolase from Helicobacter acinonychis (strain Sheeba).